A 120-amino-acid chain; its full sequence is MFVLKGYEYFLGFLLACSLVPILSLTASKVLRPSGGGPERRTTYESGMEPIGGAWIQFNIRYYMFALVFVVFDVETVFLYPWAVAFNQLGLLAFVEALIFIAILVVALVYAWRKGALEWS.

3 helical membrane passes run 7-27 (YEYFLGFLLACSLVPILSLTA), 64-84 (MFALVFVVFDVETVFLYPWAV), and 89-109 (LGLLAFVEALIFIAILVVALV).

The protein belongs to the complex I subunit 3 family. As to quaternary structure, NDH-1 can be composed of about 15 different subunits; different subcomplexes with different compositions have been identified which probably have different functions.

It localises to the cellular thylakoid membrane. The enzyme catalyses a plastoquinone + NADH + (n+1) H(+)(in) = a plastoquinol + NAD(+) + n H(+)(out). It catalyses the reaction a plastoquinone + NADPH + (n+1) H(+)(in) = a plastoquinol + NADP(+) + n H(+)(out). Its function is as follows. NDH-1 shuttles electrons from an unknown electron donor, via FMN and iron-sulfur (Fe-S) centers, to quinones in the respiratory and/or the photosynthetic chain. The immediate electron acceptor for the enzyme in this species is believed to be plastoquinone. Couples the redox reaction to proton translocation, and thus conserves the redox energy in a proton gradient. Cyanobacterial NDH-1 also plays a role in inorganic carbon-concentration. The protein is NAD(P)H-quinone oxidoreductase subunit 3 of Microcystis aeruginosa (strain NIES-843 / IAM M-2473).